The primary structure comprises 679 residues: Glycine--tRNA ligase beta subunit (679 aa).

The protein belongs to the class-II aminoacyl-tRNA synthetase family. As to quaternary structure, tetramer of two alpha and two beta subunits.

The protein resides in the cytoplasm. The enzyme catalyses tRNA(Gly) + glycine + ATP = glycyl-tRNA(Gly) + AMP + diphosphate. The sequence is that of Glycine--tRNA ligase beta subunit from Streptococcus agalactiae serotype III (strain NEM316).